Reading from the N-terminus, the 227-residue chain is Cytochrome c oxidase subunit 2 (227 aa).

At 1 to 14 (MAYPFQLGLQDATS) the chain is on the mitochondrial intermembrane side. Residues 15 to 45 (PIMEELTNFHDHTLMIVFLISSLVLYIISLM) traverse the membrane as a helical segment. Residues 46-59 (LTTKLTHTSTMDAQ) are Mitochondrial matrix-facing. Residues 60–87 (EVETIWTILPAVILILIALPSLRILYMM) form a helical membrane-spanning segment. The Mitochondrial intermembrane segment spans residues 88–227 (DEINNPALTV…YFENWSASMI (140 aa)). His-161, Cys-196, Glu-198, Cys-200, His-204, and Met-207 together coordinate Cu cation. Mg(2+) is bound at residue Glu-198. Tyr-218 carries the phosphotyrosine modification.

It belongs to the cytochrome c oxidase subunit 2 family. Component of the cytochrome c oxidase (complex IV, CIV), a multisubunit enzyme composed of 14 subunits. The complex is composed of a catalytic core of 3 subunits MT-CO1, MT-CO2 and MT-CO3, encoded in the mitochondrial DNA, and 11 supernumerary subunits COX4I, COX5A, COX5B, COX6A, COX6B, COX6C, COX7A, COX7B, COX7C, COX8 and NDUFA4, which are encoded in the nuclear genome. The complex exists as a monomer or a dimer and forms supercomplexes (SCs) in the inner mitochondrial membrane with NADH-ubiquinone oxidoreductase (complex I, CI) and ubiquinol-cytochrome c oxidoreductase (cytochrome b-c1 complex, complex III, CIII), resulting in different assemblies (supercomplex SCI(1)III(2)IV(1) and megacomplex MCI(2)III(2)IV(2)). Found in a complex with TMEM177, COA6, COX18, COX20, SCO1 and SCO2. Interacts with TMEM177 in a COX20-dependent manner. Interacts with COX20. Interacts with COX16. The cofactor is Cu cation.

The protein localises to the mitochondrion inner membrane. It carries out the reaction 4 Fe(II)-[cytochrome c] + O2 + 8 H(+)(in) = 4 Fe(III)-[cytochrome c] + 2 H2O + 4 H(+)(out). Its function is as follows. Component of the cytochrome c oxidase, the last enzyme in the mitochondrial electron transport chain which drives oxidative phosphorylation. The respiratory chain contains 3 multisubunit complexes succinate dehydrogenase (complex II, CII), ubiquinol-cytochrome c oxidoreductase (cytochrome b-c1 complex, complex III, CIII) and cytochrome c oxidase (complex IV, CIV), that cooperate to transfer electrons derived from NADH and succinate to molecular oxygen, creating an electrochemical gradient over the inner membrane that drives transmembrane transport and the ATP synthase. Cytochrome c oxidase is the component of the respiratory chain that catalyzes the reduction of oxygen to water. Electrons originating from reduced cytochrome c in the intermembrane space (IMS) are transferred via the dinuclear copper A center (CU(A)) of subunit 2 and heme A of subunit 1 to the active site in subunit 1, a binuclear center (BNC) formed by heme A3 and copper B (CU(B)). The BNC reduces molecular oxygen to 2 water molecules using 4 electrons from cytochrome c in the IMS and 4 protons from the mitochondrial matrix. In Oenomys hypoxanthus (Rufous-nosed rat), this protein is Cytochrome c oxidase subunit 2 (MT-CO2).